Reading from the N-terminus, the 85-residue chain is Large ribosomal subunit protein bL27 (85 aa).

Residues 1–10 (MAQKKGGGST) are compositionally biased toward gly residues. The segment at 1–21 (MAQKKGGGSTRNGRDSQPKML) is disordered.

Belongs to the bacterial ribosomal protein bL27 family.

The polypeptide is Large ribosomal subunit protein bL27 (Polaromonas naphthalenivorans (strain CJ2)).